A 132-amino-acid polypeptide reads, in one-letter code: MTEYCFPRHVRLLNAGDYQSVFNDTSSKVFAGEFLLLARKRDDDQTRLGLIVSKKTDKRAVGRNRIKRLVRDSFRHHKIPLSGLDIVFLARHGIKELENADLHNRLDKAWDQLAKKALKPTQNKKRDQSRQK.

Belongs to the RnpA family. In terms of assembly, consists of a catalytic RNA component (M1 or rnpB) and a protein subunit.

The enzyme catalyses Endonucleolytic cleavage of RNA, removing 5'-extranucleotides from tRNA precursor.. In terms of biological role, RNaseP catalyzes the removal of the 5'-leader sequence from pre-tRNA to produce the mature 5'-terminus. It can also cleave other RNA substrates such as 4.5S RNA. The protein component plays an auxiliary but essential role in vivo by binding to the 5'-leader sequence and broadening the substrate specificity of the ribozyme. The polypeptide is Ribonuclease P protein component (Marinomonas sp. (strain MWYL1)).